Reading from the N-terminus, the 334-residue chain is tRNA-dihydrouridine(20/20a) synthase (334 aa).

FMN-binding positions include 17 to 19 and Q70; that span reads PMM. C100 serves as the catalytic Proton donor. Residues K139, H171, 211–213, and 233–234 contribute to the FMN site; these read NGG and GR.

The protein belongs to the Dus family. DusA subfamily. FMN is required as a cofactor.

It carries out the reaction 5,6-dihydrouridine(20) in tRNA + NADP(+) = uridine(20) in tRNA + NADPH + H(+). The enzyme catalyses 5,6-dihydrouridine(20) in tRNA + NAD(+) = uridine(20) in tRNA + NADH + H(+). The catalysed reaction is 5,6-dihydrouridine(20a) in tRNA + NADP(+) = uridine(20a) in tRNA + NADPH + H(+). It catalyses the reaction 5,6-dihydrouridine(20a) in tRNA + NAD(+) = uridine(20a) in tRNA + NADH + H(+). Catalyzes the synthesis of 5,6-dihydrouridine (D), a modified base found in the D-loop of most tRNAs, via the reduction of the C5-C6 double bond in target uridines. Specifically modifies U20 and U20a in tRNAs. The polypeptide is tRNA-dihydrouridine(20/20a) synthase (dus2) (Synechocystis sp. (strain ATCC 27184 / PCC 6803 / Kazusa)).